Here is a 179-residue protein sequence, read N- to C-terminus: Large ribosomal subunit protein uL5 (179 aa).

Belongs to the universal ribosomal protein uL5 family. Part of the 50S ribosomal subunit; part of the 5S rRNA/L5/L18/L25 subcomplex. Contacts the 5S rRNA and the P site tRNA. Forms a bridge to the 30S subunit in the 70S ribosome.

Functionally, this is one of the proteins that bind and probably mediate the attachment of the 5S RNA into the large ribosomal subunit, where it forms part of the central protuberance. In the 70S ribosome it contacts protein S13 of the 30S subunit (bridge B1b), connecting the 2 subunits; this bridge is implicated in subunit movement. Contacts the P site tRNA; the 5S rRNA and some of its associated proteins might help stabilize positioning of ribosome-bound tRNAs. The polypeptide is Large ribosomal subunit protein uL5 (Exiguobacterium sp. (strain ATCC BAA-1283 / AT1b)).